The primary structure comprises 484 residues: Ribosomal RNA small subunit methyltransferase F (484 aa).

S-adenosyl-L-methionine contacts are provided by residues 119–125 (ASAPGSK), Glu-143, Asp-170, and Asp-188. Catalysis depends on Cys-241, which acts as the Nucleophile.

Belongs to the class I-like SAM-binding methyltransferase superfamily. RsmB/NOP family.

The protein resides in the cytoplasm. The catalysed reaction is cytidine(1407) in 16S rRNA + S-adenosyl-L-methionine = 5-methylcytidine(1407) in 16S rRNA + S-adenosyl-L-homocysteine + H(+). Its function is as follows. Specifically methylates the cytosine at position 1407 (m5C1407) of 16S rRNA. This chain is Ribosomal RNA small subunit methyltransferase F, found in Shewanella frigidimarina (strain NCIMB 400).